The following is a 1125-amino-acid chain: Transcription-repair-coupling factor (1125 aa).

One can recognise a Helicase ATP-binding domain in the interval 597–758 (DMMSFKVMDR…LIKLRDISVL (162 aa)). 610–617 (GDVGFGKT) provides a ligand contact to ATP. Residues 711–714 (DEEQ) carry the DEEQ box motif. Residues 774–933 (SFSELLIKHA…GFKIAMKDME (160 aa)) enclose the Helicase C-terminal domain.

In the N-terminal section; belongs to the UvrB family. The protein in the C-terminal section; belongs to the helicase family. RecG subfamily.

The protein resides in the cytoplasm. Couples transcription and DNA repair by recognizing RNA polymerase (RNAP) stalled at DNA lesions. Mediates ATP-dependent release of RNAP and its truncated transcript from the DNA, and recruitment of nucleotide excision repair machinery to the damaged site. The protein is Transcription-repair-coupling factor of Borreliella burgdorferi (strain ATCC 35210 / DSM 4680 / CIP 102532 / B31) (Borrelia burgdorferi).